The primary structure comprises 186 residues: Testis-expressed protein 36 (186 aa).

The tract at residues 1 to 52 (MTKGRRFNPPSDKDGRWFPHIGLTQKTPESITSATSKEPQSPHLPRQAEGKL) is disordered. Residues 24–39 (TQKTPESITSATSKEP) show a composition bias toward polar residues.

This is Testis-expressed protein 36 (TEX36) from Homo sapiens (Human).